Reading from the N-terminus, the 79-residue chain is Protein S100-G (79 aa).

The residue at position 2 (S2) is an N-acetylserine. 2 EF-hand domains span residues 13 to 48 (IFQK…KASS) and 45 to 79 (KASS…KLSQ). Ca(2+) contacts are provided by Q26 and E31. Phosphoserine occurs at positions 42 and 47. Ca(2+) is bound by residues D58, N60, D62, E64, and E69.

This sequence belongs to the S-100 family.

In Rattus norvegicus (Rat), this protein is Protein S100-G (S100g).